A 260-amino-acid polypeptide reads, in one-letter code: Small ribosomal subunit protein uS2 (260 aa).

This sequence belongs to the universal ribosomal protein uS2 family.

This Roseobacter denitrificans (strain ATCC 33942 / OCh 114) (Erythrobacter sp. (strain OCh 114)) protein is Small ribosomal subunit protein uS2.